Here is a 513-residue protein sequence, read N- to C-terminus: Light-independent protochlorophyllide reductase subunit B (513 aa).

Aspartate 36 lines the [4Fe-4S] cluster pocket. Catalysis depends on aspartate 299, which acts as the Proton donor. 434–435 (GM) is a binding site for substrate.

It belongs to the ChlB/BchB/BchZ family. Protochlorophyllide reductase is composed of three subunits; ChlL, ChlN and ChlB. Forms a heterotetramer of two ChlB and two ChlN subunits. [4Fe-4S] cluster is required as a cofactor.

The protein resides in the plastid. It is found in the chloroplast. It carries out the reaction chlorophyllide a + oxidized 2[4Fe-4S]-[ferredoxin] + 2 ADP + 2 phosphate = protochlorophyllide a + reduced 2[4Fe-4S]-[ferredoxin] + 2 ATP + 2 H2O. The protein operates within porphyrin-containing compound metabolism; chlorophyll biosynthesis (light-independent). Component of the dark-operative protochlorophyllide reductase (DPOR) that uses Mg-ATP and reduced ferredoxin to reduce ring D of protochlorophyllide (Pchlide) to form chlorophyllide a (Chlide). This reaction is light-independent. The NB-protein (ChlN-ChlB) is the catalytic component of the complex. In Chaetosphaeridium globosum (Charophycean green alga), this protein is Light-independent protochlorophyllide reductase subunit B.